The following is a 450-amino-acid chain: Phosphoglucosamine mutase 2 (450 aa).

S101 acts as the Phosphoserine intermediate in catalysis. Residues S101, D245, D247, and D249 each coordinate Mg(2+). Phosphoserine is present on S101.

Belongs to the phosphohexose mutase family. It depends on Mg(2+) as a cofactor. Post-translationally, activated by phosphorylation.

The enzyme catalyses alpha-D-glucosamine 1-phosphate = D-glucosamine 6-phosphate. Functionally, catalyzes the conversion of glucosamine-6-phosphate to glucosamine-1-phosphate. This chain is Phosphoglucosamine mutase 2, found in Shewanella frigidimarina (strain NCIMB 400).